A 168-amino-acid polypeptide reads, in one-letter code: UPF0134 protein MPN_524 (168 aa).

It belongs to the UPF0134 family.

This Mycoplasma pneumoniae (strain ATCC 29342 / M129 / Subtype 1) (Mycoplasmoides pneumoniae) protein is UPF0134 protein MPN_524.